A 225-amino-acid chain; its full sequence is Phosphoribosylformylglycinamidine synthase subunit PurQ (225 aa).

Residues 5–225 (RFGIVVFPGS…WQSIVQSLAG (221 aa)) enclose the Glutamine amidotransferase type-1 domain. The Nucleophile role is filled by cysteine 89. Active-site residues include histidine 198 and glutamate 200.

Part of the FGAM synthase complex composed of 1 PurL, 1 PurQ and 2 PurS subunits.

The protein localises to the cytoplasm. It catalyses the reaction N(2)-formyl-N(1)-(5-phospho-beta-D-ribosyl)glycinamide + L-glutamine + ATP + H2O = 2-formamido-N(1)-(5-O-phospho-beta-D-ribosyl)acetamidine + L-glutamate + ADP + phosphate + H(+). The catalysed reaction is L-glutamine + H2O = L-glutamate + NH4(+). Its pathway is purine metabolism; IMP biosynthesis via de novo pathway; 5-amino-1-(5-phospho-D-ribosyl)imidazole from N(2)-formyl-N(1)-(5-phospho-D-ribosyl)glycinamide: step 1/2. Part of the phosphoribosylformylglycinamidine synthase complex involved in the purines biosynthetic pathway. Catalyzes the ATP-dependent conversion of formylglycinamide ribonucleotide (FGAR) and glutamine to yield formylglycinamidine ribonucleotide (FGAM) and glutamate. The FGAM synthase complex is composed of three subunits. PurQ produces an ammonia molecule by converting glutamine to glutamate. PurL transfers the ammonia molecule to FGAR to form FGAM in an ATP-dependent manner. PurS interacts with PurQ and PurL and is thought to assist in the transfer of the ammonia molecule from PurQ to PurL. In Synechococcus sp. (strain JA-3-3Ab) (Cyanobacteria bacterium Yellowstone A-Prime), this protein is Phosphoribosylformylglycinamidine synthase subunit PurQ.